Here is a 116-residue protein sequence, read N- to C-terminus: Photosystem II assembly factor Psb28 protein (116 aa).

Belongs to the Psb28 family. Part of a photosystem II (PSII) assembly intermediate complex PSII-I; crystallized from a strain deleted of psbJ, it forms monomeric PSII before addition of the oxygen evolving complex. PSII-I includes 3 assembly factors not found in mature PSII (Psb27, Psb28 and Psb34). This protein binds to the cytoplasmic face of D1 and D2 (psbA and psbD), contacting CP47 (psbB) directly above the quinone b-binding site.

Its subcellular location is the cellular thylakoid membrane. Its function is as follows. A photosystem II (PSII) assembly factor that binds PSII during biogenesis, protecting the complex until water splitting is activated. In Thermosynechococcus vestitus (strain NIES-2133 / IAM M-273 / BP-1), this protein is Photosystem II assembly factor Psb28 protein.